We begin with the raw amino-acid sequence, 248 residues long: Isoprenyl transferase (248 aa).

Residue Asp23 is part of the active site. Residue Asp23 coordinates Mg(2+). Substrate contacts are provided by residues 24-27, Trp28, Arg36, His40, and 68-70; these read GNGR and STE. Asn71 acts as the Proton acceptor in catalysis. Substrate-binding positions include Trp72, Arg74, Arg185, and 191-193; that span reads RIS. Position 204 (Glu204) interacts with Mg(2+).

This sequence belongs to the UPP synthase family. As to quaternary structure, homodimer. It depends on Mg(2+) as a cofactor.

Its function is as follows. Catalyzes the condensation of isopentenyl diphosphate (IPP) with allylic pyrophosphates generating different type of terpenoids. The protein is Isoprenyl transferase of Neisseria gonorrhoeae (strain ATCC 700825 / FA 1090).